A 111-amino-acid chain; its full sequence is WAP four-disulfide core domain protein 12 (111 aa).

An N-terminal signal peptide occupies residues 1–23 (MGSSSFLVLMVSLTLVTLVAVEG). One can recognise a WAP domain in the interval 27–74 (DIEKAGVCPADNVRCFKSDPPQCHTDQDCLGERKCCYLHCGFKCVIPV). Disulfide bonds link C34/C62, C41/C66, C49/C61, and C55/C70. Residues 80 to 111 (GGNKDEDVSRPYPEPGWEAKCPGSSSTRCPQK) form a disordered region. The span at 102–111 (GSSSTRCPQK) shows a compositional bias: polar residues.

It is found in the secreted. Its function is as follows. Antibacterial protein. Putative acid-stable proteinase inhibitor. This chain is WAP four-disulfide core domain protein 12 (WFDC12), found in Pan troglodytes (Chimpanzee).